Consider the following 847-residue polypeptide: Protein IRS1 (847 aa).

3 disordered regions span residues 1-82 (MAQR…NFWH), 607-627 (WLME…ATMP), and 715-847 (QVIP…HVHH). Over residues 16-25 (RGRGAGGPSG) the composition is skewed to gly residues. The span at 26–56 (VGSSPPSSCVPMGATSTAGTGASAAPTATPG) shows a compositional bias: low complexity. The segment covering 723 to 733 (EPEDDDEDPTY) has biased composition (acidic residues). Basic residues predominate over residues 833 to 847 (RPKKCQTHAPHHVHH).

This sequence belongs to the herpesviridae US22 family. In terms of assembly, interacts (via N-terminus) with the viral DNA polymerase accessory subunit UL44. Interacts (via C-terminus) with host EIF2AK2.

Its subcellular location is the virion. It localises to the host cytoplasm. It is found in the host nucleus. In terms of biological role, acts as a transactivator along with IE2, and is required for oriLyt-dependent DNA replication in the transient transfection replication assay using native promoters. The chain is Protein IRS1 (IRS1) from Human cytomegalovirus (strain Merlin) (HHV-5).